We begin with the raw amino-acid sequence, 434 residues long: Gamma-enolase (434 aa).

Position 2 is an N-acetylserine (S2). The residue at position 5 (K5) is an N6-acetyllysine. T26 is subject to Phosphothreonine. S40 lines the Mg(2+) pocket. Phosphotyrosine is present on Y44. K60 carries the N6-acetyllysine; alternate modification. N6-succinyllysine; alternate is present on K60. K64 is modified (N6-acetyllysine). K89 bears the N6-acetyllysine; alternate mark. Residue K89 is modified to N6-succinyllysine; alternate. Positions 158 and 167 each coordinate substrate. An N6-acetyllysine mark is found at K193, K197, and K199. At K202 the chain carries N6-acetyllysine; alternate. K202 is covalently cross-linked (Glycyl lysine isopeptide (Lys-Gly) (interchain with G-Cter in SUMO2); alternate). The Proton donor role is filled by E210. Residues K228 and K233 each carry the N6-acetyllysine; alternate modification. K228 carries the post-translational modification N6-succinyllysine; alternate. The residue at position 233 (K233) is an N6-(2-hydroxyisobutyryl)lysine; alternate. A Mg(2+)-binding site is contributed by D245. K256 is modified (N6-acetyllysine). At S263 the chain carries Phosphoserine. Y287 is modified (phosphotyrosine). S291 carries the post-translational modification Phosphoserine. Mg(2+) is bound by residues E293 and D318. Residues E293 and D318 each contribute to the substrate site. Residues K335 and K343 each carry the N6-acetyllysine modification. K343 functions as the Proton acceptor in the catalytic mechanism. Substrate-binding positions include 370–373 (SHRS) and K394. Residue K406 is modified to N6-acetyllysine.

The protein belongs to the enolase family. Mammalian enolase is composed of 3 isozyme subunits, alpha, beta and gamma, which can form homodimers or heterodimers which are cell-type and development-specific. Requires Mg(2+) as cofactor. In terms of tissue distribution, the alpha/alpha homodimer is expressed in embryo and in most adult tissues. The alpha/beta heterodimer and the beta/beta homodimer are found in striated muscle, and the alpha/gamma heterodimer and the gamma/gamma homodimer in neurons.

It localises to the cytoplasm. The protein resides in the cell membrane. It carries out the reaction (2R)-2-phosphoglycerate = phosphoenolpyruvate + H2O. The protein operates within carbohydrate degradation; glycolysis; pyruvate from D-glyceraldehyde 3-phosphate: step 4/5. Has neurotrophic and neuroprotective properties on a broad spectrum of central nervous system (CNS) neurons. Binds, in a calcium-dependent manner, to cultured neocortical neurons and promotes cell survival. The sequence is that of Gamma-enolase (ENO2) from Homo sapiens (Human).